The chain runs to 210 residues: Thymidylate kinase (210 aa).

14-21 (GLDRSGKS) provides a ligand contact to ATP.

Belongs to the thymidylate kinase family.

It catalyses the reaction dTMP + ATP = dTDP + ADP. Its pathway is pyrimidine metabolism; dTTP biosynthesis. Functionally, catalyzes the conversion of dTMP to dTDP. The protein is Thymidylate kinase (tmp1) of Schizosaccharomyces pombe (strain 972 / ATCC 24843) (Fission yeast).